The following is a 704-amino-acid chain: UvrABC system protein B (704 aa).

In terms of domain architecture, Helicase ATP-binding spans 35-188 (ERINNGEKDV…DDLLRKFVSM (154 aa)). Residue 48-55 (GATGTGKS) coordinates ATP. Positions 101 to 124 (YYDYYQPEAYVAQTDTFIEKDSSI) match the Beta-hairpin motif. Positions 438–604 (QIDDLLGEIR…PLRKKIADIT (167 aa)) constitute a Helicase C-terminal domain. Residues 659–694 (VGMIAQLTEQMHGAAAELQFEVAARIRDEVSELKKE) enclose the UVR domain.

Belongs to the UvrB family. In terms of assembly, forms a heterotetramer with UvrA during the search for lesions. Interacts with UvrC in an incision complex.

It is found in the cytoplasm. Its function is as follows. The UvrABC repair system catalyzes the recognition and processing of DNA lesions. A damage recognition complex composed of 2 UvrA and 2 UvrB subunits scans DNA for abnormalities. Upon binding of the UvrA(2)B(2) complex to a putative damaged site, the DNA wraps around one UvrB monomer. DNA wrap is dependent on ATP binding by UvrB and probably causes local melting of the DNA helix, facilitating insertion of UvrB beta-hairpin between the DNA strands. Then UvrB probes one DNA strand for the presence of a lesion. If a lesion is found the UvrA subunits dissociate and the UvrB-DNA preincision complex is formed. This complex is subsequently bound by UvrC and the second UvrB is released. If no lesion is found, the DNA wraps around the other UvrB subunit that will check the other stand for damage. In Pseudarthrobacter chlorophenolicus (strain ATCC 700700 / DSM 12829 / CIP 107037 / JCM 12360 / KCTC 9906 / NCIMB 13794 / A6) (Arthrobacter chlorophenolicus), this protein is UvrABC system protein B.